A 132-amino-acid chain; its full sequence is Sec-independent protein translocase protein TatB (132 aa).

A helical transmembrane segment spans residues 1–21; that stretch reads MFDIGFWELVLISVVGLVVLG. The tract at residues 70–132 is disordered; that stretch reads GMEDLSPELK…KVSAADKKAE (63 aa). Composition is skewed to basic and acidic residues over residues 96-108 and 115-132; these read YADK…ETAK and SAEK…KKAE.

This sequence belongs to the TatB family. The Tat system comprises two distinct complexes: a TatABC complex, containing multiple copies of TatA, TatB and TatC subunits, and a separate TatA complex, containing only TatA subunits. Substrates initially bind to the TatABC complex, which probably triggers association of the separate TatA complex to form the active translocon.

The protein resides in the cell inner membrane. In terms of biological role, part of the twin-arginine translocation (Tat) system that transports large folded proteins containing a characteristic twin-arginine motif in their signal peptide across membranes. Together with TatC, TatB is part of a receptor directly interacting with Tat signal peptides. TatB may form an oligomeric binding site that transiently accommodates folded Tat precursor proteins before their translocation. This is Sec-independent protein translocase protein TatB from Vibrio parahaemolyticus serotype O3:K6 (strain RIMD 2210633).